We begin with the raw amino-acid sequence, 532 residues long: Small ribosomal subunit protein uS2cz (532 aa).

Residues 1-271 are N-terminal extension; that stretch reads METLEKNFKK…SPISSKEKKA (271 aa). 3 consecutive TRAM domains span residues 38–97, 127–186, and 197–260; these read ALQA…SILN, DFKV…KPIL, and NQMI…KILK.

It belongs to the universal ribosomal protein uS2 family.

Its subcellular location is the plastid. The protein resides in the chloroplast. This is Small ribosomal subunit protein uS2cz (rps2-1) from Tetradesmus obliquus (Green alga).